A 3619-amino-acid polypeptide reads, in one-letter code: MFRRFKDLIGTSEDPTPQVPHSPGHPPHQPPQQQQQQQQQQQQQQQQQQQQQQQQQQPQPQQPLSPRSVSSPIGSTTSSNSTSSFSSPVRKYSSATEESSSINSNNNNNNNKNNNNNNNSNIIESNINVWTIMIGSEVEVIRSQATAQKLKLLWQEFLSSKSDKDKVMRLNKLLPYFIGLYEDKKIDTKSPMVDIFGNNSKSFSFAISRRLVKDINEIMKQANSPQQPPQPPQLIKETIAKEIYKFFSTTSGQVSGFELLYSIEILSESNTSCAEAMAEASIPSMLVRCLQYFFLVPYTTMMETTKGIIEEKLIRTLCFLSKQKSAIEELQKTDTLSTLFALMSNECPPSHRPLRAKIGSFGLELTDLYPPTITYINSKRVIANIIKDLTNYYMFTPESYVTLCRIIIKILSESSKKSTILLDEFQRNDGYTFLVDSLFRLESSKDKPALFEQLLDSICSLVYIGYGNVSLPVENSSVPYQTSINNIKEISNQNYISKNGNAFKVLERYFLKSNYEENRVKILDRILSVYSSNTVNFILLQHTSTLTKFIQEYESLSNGLKYHVMKIVCFVVTVLNCVPFQELSTFSLLVGENPSFYTLEMINQLITTLVNFEFRYKHIFRETGLLDILVKVIDVIAQDIIRLNNSKKIDDDDENNNNNNNNNNNNNNNNNNNNDNDNNNNNDNNNEENGSGSNGPIVPCMTGNGEKEADSNDQALNSIIKVESFQILLDSLFILISENPDNISLIRSFSIFNILLRFLPYSSVRGKSLRILQQLIKYDPEPTQKEFDGLIKVLTSVNKENYPMKSDILNATRKLFNISKHARDSFREHGGFVSIISVFISLESSFSPNRKDSRNWDMEKLELIESICRCTTSALCGNVINRENFEQQIGYKTFSSCLIMTGVLGTEFSKSVVDFIFDMVTENLNASDQISNQMIINNVESFNVILDIIPHIENKDFRLQIISRINKMAEYGRYNQEALSKLSIPDWILSRFPSNLSNANDPLQPLLLSLIQTVGANCLSGSELRQFVKLLQPEHSPEVLLKILSSMAKSPPTPPYFEFNLSKIPFGYIRVPITERAWPPTNGYTIMFWLYIDKFPTVNNNNNNNNSSNNSNNSNNSNNNNNNNNNNDQIDLVHIYSDDKKSSLYIYLKNGIITVNIINSSKYVIEIPSYKFVEGKWYHIGIVHARRLLGGTDFKLFVDGFLKYTATKAQYPAQITSGSMLICDIGVSNQNRFPTDSIWRIGTFYLLEDSLGAKHINTIYFLGPNYASNFKGRFSPYQTYEIVNSANLMAIKDLDYGDQLGPLNLAKVSMQIDENKILVGLCASNKLIRTNNSSKVVYNEIFNGIINELSQNHGVALNVFSSPNGTSPNLTGLQNNNNNNNNSGGSNSKKDLEGRVEIINQADLTTKLRGVLIGSVEAFRRNKVADSIKKIGGMPISLLLLEKANSEETLFDSLGLLVGLIQYHPTNTHEMSQINGYELLAWVLKKKASLGLFNSNILELLFDLIGINGNCSTTITSRAPQEGTVANWNACKYIMMNWDIWRLTTPALQRHVINGYNSLIVNNIQRRFNIDSLRKVNVIQEIFDILSSSTNEEPLPESVASSVINVLYNILSYGGLIEDDIRQISAFLISHLHKDIPTPSSSSSSSSTSSTSSRRKSIHRSKLATMELSNTATIQLVNHVFYTFLKVVSNCQTQETAAIFRRVSSYWCFFFIDENLPPLTVSLALRVTCIFFLYKYDYCSTFIKKSGFKLLEKVLPSLSGHQEIYLCLLHLLLGGDPKLLVDLDLSSSSGGAGGTTIVFHELLRIFTPFEKSLYCIEAAQLILSLIKRSYEDNYQYLEQKQQELQNANQGLDNDELLSSLISNVNINNSINNNDNSNSPLSTFQTISRSVSSSSISSNISSSSSSSTLVNSSNSNNNNNTPTSGLASTITKFGNLWNKFEEKTLEFAVTTGAIDENSTGATDAQQAALKKKNRMSIQSSPFQSKNLGTGGDDSVTNTPNGSSLHNRVTGMDDDSKLNGALGGGGGGGGGGVSVGDNQPINFNLYDEMLPELKISQFATPEESSNLQYTMLTYFIYLFHENQYFQQECYSQPMVEELISILFPNGKINLPPLYNSTGQTNGIKDRVLDLVVKFLCQIMLSAMRKTSKAISIIEMVLEGAPTTATDEEFILYHSRILLDLMYVVETNITKTEFFDNERVHSNLIKLSSMLVDRVNLDQLVKNNKIIIAKRIFLFIVKILEKLEADRVGLQKTVQSLYKSLNRIILYLINHTTDTDLSFVANHIINHQRIIFSENNLDSDFMNAFCYPLYKLVISDQHEHVDNSIKLWRLLLSLKTSSYIESLATVLQLKVSSGSNQRQSEIIDLKPGFELLRNTSGNGAFNNDEFKLWINDNIQTITQVFEENPKKQHLSFKNNEKKHSSEHTLPSLKSRRTERLSKKQRQDRKDQSHQEEKSKHITKKAQYFVRSESDRRKKIKQLESDKQKFNAIQWENMRAQITRERAVWGPSEPHPLDKWKLDSTEGPYRMRKKMEKNYNFYKNYPYVPPSFDEQNNSLLPIPCSADSETYMNIVGTEEANLLESSYWKFDLLSTNQVITSSTNTSSITNNNNNNNNNNNNNNNNNNNTITKSTSQNANNNNNANNMNQSTSSSSSNTTTTTTPQQSSSQIKVSSPELSSNEITPPTSPVQSSSEDVFKSPKLQSSTVEGQLSRNPSSSELFNDNSSTISEENSSLTSASTTLSPPPPSTQTTTTTTTSTPTTQSSVATTTTGNTNEVDEETSTNNQTTSEDETQAFIRLLDPYDQSYLKDAMRKDPRLNGIMYNCGSVDGMDKIEGILIFCPVYMYIFDGYYKDENTGDISEVEEKINSEWLPEGTVLPMKKKIIHYFLKWAYEDIRDVLKRRYLLRQVALEIFSTDGRNNLVVYRDEPTRDEVYHTLVNNVSSHNTIGGDAQGITGGQTGNDDNDDHHGGGGGRGVRDRFTSIWRKSPLTLKWQQGQISNFQYLMHLNTLAGRSYNDLTQYPVFPWVLSDYESEELDIDDPKVYRDLSKPMGALEESRAQKFRERFENWDDQEPNEHGHKVPKFHYGTHYSSAAIVLYYLIRLEPFTQHFLKLQGGRWDQPDRLFSSITEAWASSSQGSTGVVMELIPEFYYLDEFLVNNNKFNFGTKQGGEPIDDIILPPWAKGSPQEFIKLHRKALESDYVSEHLHEWIDLIFGYRQQGKAADDSLNVFYYLTYEGAVNIDAISDPVEKAATIAQINNFGQTPKQLFDKPHPKRNATLMGLPFYAKALTGNFIKDIGEPVGQIRLINDRATCVGFNKVLLPPNHSKYMLWGLPDGSIRYNTGDKIKVLEDHHDGPLTCLTATEDGRICVSGGSDSLICVYNLKRFSLAKRLSGHTGSITCVSASRPYSIIVSGSDDRTCIIWDLNRLCYVRSLDAHEGPISCIGIHDTTGEIVVCSGTTISVYTVNGELLINYKTSQIANDQITCCIWSKGPEWLGENVLLTGHRDGKVKVWGLETRLLPDNNNSNNNNNNNNNNNNNATQIPSTNNNKLKFKNVIILRATFSNSQSHSTAITSIFLTNDQQKFYTGDITGRVCMWSDNEASQVKQRGWINTDIRGILQSEKK.

7 disordered regions span residues 1 to 117 (MFRR…NNNN), 648 to 709 (KIDD…EKEA), 1101 to 1129 (NNNNNNSSNNSNNSNNSNNNNNNNNNNDQ), 1367 to 1390 (SPNLTGLQNNNNNNNNSGGSNSKK), 1636 to 1658 (IPTPSSSSSSSSTSSTSSRRKSI), 1893 to 1924 (SSISSNISSSSSSSTLVNSSNSNNNNNTPTSG), and 1964 to 1999 (QQAALKKKNRMSIQSSPFQSKNLGTGGDDSVTNTPN). Pro residues predominate over residues 17-30 (PQVPHSPGHPPHQP). Low complexity-rich tracts occupy residues 31–59 (PQQQQQQQQQQQQQQQQQQQQQQQQQQPQ), 68–87 (SVSSPIGSTTSSNSTSSFSS), 97–117 (EESSSINSNNNNNNNKNNNNN), 656–689 (NNNNNNNNNNNNNNNNNNNDNDNNNNNDNNNEEN), 1101–1127 (NNNNNNSSNNSNNSNNSNNNNNNNNNN), 1375–1387 (NNNNNNNNSGGSN), 1640–1652 (SSSSSSSSTSSTS), and 1893–1923 (SSISSNISSSSSSSTLVNSSNSNNNNNTPTS). Residues 94-133 (SATEESSSINSNNNNNNNKNNNNNNNSNIIESNINVWTIM) form a WD 1 repeat. Residues 1974–1986 (MSIQSSPFQSKNL) show a composition bias toward polar residues. The stretch at 2234–2258 (VKILEKLEADRVGLQKTVQSLYKSL) forms a coiled coil. A WD 2 repeat occupies 2294 to 2335 (LDSDFMNAFCYPLYKLVISDQHEHVDNSIKLWRLLLSLKTSS). Disordered stretches follow at residues 2403–2457 (KKQH…ITKK) and 2596–2785 (NTSS…SEDE). Over residues 2440–2452 (DRKDQSHQEEKSK) the composition is skewed to basic and acidic residues. Positions 2596–2662 (NTSSITNNNN…TTTPQQSSSQ (67 aa)) are enriched in low complexity. Composition is skewed to polar residues over residues 2663–2687 (IKVSSPELSSNEITPPTSPVQSSSE) and 2694–2725 (KLQSSTVEGQLSRNPSSSELFNDNSSTISEEN). 2 stretches are compositionally biased toward low complexity: residues 2726-2735 (SSLTSASTTL) and 2742-2764 (TQTTTTTTTSTPTTQSSVATTTT). One can recognise a BEACH-type PH domain in the interval 2807–2932 (KDPRLNGIMY…TRDEVYHTLV (126 aa)). The segment at 2940-2971 (TIGGDAQGITGGQTGNDDNDDHHGGGGGRGVR) is disordered. Residues 2944 to 2953 (DAQGITGGQT) are compositionally biased toward gly residues. Positions 2959–2971 (DDHHGGGGGRGVR) are enriched in basic and acidic residues. Positions 2972–3270 (DRFTSIWRKS…QLFDKPHPKR (299 aa)) constitute a BEACH domain. WD repeat units lie at residues 3347–3386 (HHDGPLTCLTATEDGRICVSGGSDSLICVYNLKRFSLAKR), 3389–3428 (GHTGSITCVSASRPYSIIVSGSDDRTCIIWDLNRLCYVRS), 3431–3471 (AHEG…NYKT), 3474–3518 (IAND…LPDN), and 3563–3602 (SHSTAITSIFLTNDQQKFYTGDITGRVCMWSDNEASQVKQ). Residues 3516-3539 (PDNNNSNNNNNNNNNNNNNATQIP) are disordered. Residues 3518–3534 (NNNSNNNNNNNNNNNNN) are compositionally biased toward low complexity.

The protein resides in the contractile vacuole membrane. Involved in myosin-independent cytokinesis and early steps of phagocytosis. Also involved in contractile vacuole-mediated osmoregulation. This chain is BEACH domain-containing protein lvsA (lvsA), found in Dictyostelium discoideum (Social amoeba).